The chain runs to 280 residues: MSFGGHTPRKRFGQHWLRDERVLDRILDASDLGDDDRVLEVGPGRGALTERLLASSAAAVHAVELDRDLVAGLQDRFGDSPRFSLREGDVLAVPLTLPDGQRATKVVANIPYNITGPLLERLIGRLDQPVDPPYQRLVLLVQKEVAERIRARPGASSFSALSVRMQLLAKCSSVCPVPPRCFQPPPKVHSEVIRLDPLPLEQRPDPVICRRVERLLKQAFLARRKMLRNTLTVSQPLSELETITQQAGIDLRQRPQEVAPHAWVELARGLNQADSAASSL.

S-adenosyl-L-methionine is bound by residues His15, Leu17, Gly42, Glu64, Asp89, and Asn109.

This sequence belongs to the class I-like SAM-binding methyltransferase superfamily. rRNA adenine N(6)-methyltransferase family. RsmA subfamily.

Its subcellular location is the cytoplasm. The enzyme catalyses adenosine(1518)/adenosine(1519) in 16S rRNA + 4 S-adenosyl-L-methionine = N(6)-dimethyladenosine(1518)/N(6)-dimethyladenosine(1519) in 16S rRNA + 4 S-adenosyl-L-homocysteine + 4 H(+). Its function is as follows. Specifically dimethylates two adjacent adenosines (A1518 and A1519) in the loop of a conserved hairpin near the 3'-end of 16S rRNA in the 30S particle. May play a critical role in biogenesis of 30S subunits. The chain is Ribosomal RNA small subunit methyltransferase A from Synechococcus sp. (strain WH7803).